A 315-amino-acid chain; its full sequence is Serine/threonine-protein phosphatase PP2A catalytic subunit 3 (315 aa).

Mn(2+)-binding residues include Asp62, His64, Asp90, and Asn122. The Proton donor role is filled by His123. Mn(2+) is bound by residues His172 and His247. A disordered region spans residues 294-315 (QFEPAPRENEPHTTRRVPDYFL). Residues 298 to 315 (APRENEPHTTRRVPDYFL) show a composition bias toward basic and acidic residues. The residue at position 315 (Leu315) is a Leucine methyl ester.

It belongs to the PPP phosphatase family. PP-2A subfamily. Requires Mn(2+) as cofactor. In terms of processing, reversibly methyl esterified on Leu-315 by leucine carboxyl methyltransferase 1 (PPM1) and protein phosphatase methylesterase 1 (PPE1). Carboxyl methylation influences the affinity of the catalytic subunit for the different regulatory subunits, thereby modulating the PP2A holoenzyme's substrate specificity, enzyme activity and cellular localization.

It carries out the reaction O-phospho-L-seryl-[protein] + H2O = L-seryl-[protein] + phosphate. The catalysed reaction is O-phospho-L-threonyl-[protein] + H2O = L-threonyl-[protein] + phosphate. This chain is Serine/threonine-protein phosphatase PP2A catalytic subunit 3 (Ppn3), found in Paramecium tetraurelia.